We begin with the raw amino-acid sequence, 269 residues long: Intron-associated endonuclease 3 (269 aa).

This endonuclease is specific to the nrdB gene splice junction and is involved in intron homing. The chain is Intron-associated endonuclease 3 (ITEVIIIR) from Enterobacteria phage RB3 (Bacteriophage RB3).